Consider the following 435-residue polypeptide: Elongation factor 1-alpha (435 aa).

The region spanning Lys-6–Val-231 is the tr-type G domain. The segment at Gly-15 to Ser-22 is G1. Residue Gly-15–Ser-22 coordinates GTP. The interval Gly-71 to Asp-75 is G2. Residues Asp-92–Gly-95 form a G3 region. GTP-binding positions include Asp-92–His-96 and Asn-154–Asp-157. The interval Asn-154–Asp-157 is G4. The G5 stretch occupies residues Ser-195–Phe-197.

It belongs to the TRAFAC class translation factor GTPase superfamily. Classic translation factor GTPase family. EF-Tu/EF-1A subfamily.

The protein localises to the cytoplasm. In terms of biological role, this protein promotes the GTP-dependent binding of aminoacyl-tRNA to the A-site of ribosomes during protein biosynthesis. This Tetrahymena pyriformis protein is Elongation factor 1-alpha.